A 905-amino-acid polypeptide reads, in one-letter code: Protein translocase subunit SecA (905 aa).

ATP contacts are provided by residues glutamine 87, 105 to 109 (GEGKT), and aspartate 512. The disordered stretch occupies residues 836–905 (DVDAVDEQRK…KKYKHCHGKL (70 aa)). The span at 841–858 (DEQRKAADSAPREFRHEQ) shows a compositional bias: basic and acidic residues. Zn(2+) contacts are provided by cysteine 890, cysteine 892, cysteine 901, and histidine 902. Residues 896 to 905 (KKYKHCHGKL) are compositionally biased toward basic residues.

It belongs to the SecA family. Monomer and homodimer. Part of the essential Sec protein translocation apparatus which comprises SecA, SecYEG and auxiliary proteins SecDF-YajC and YidC. Zn(2+) serves as cofactor.

It localises to the cell inner membrane. The protein resides in the cytoplasm. The enzyme catalyses ATP + H2O + cellular proteinSide 1 = ADP + phosphate + cellular proteinSide 2.. Part of the Sec protein translocase complex. Interacts with the SecYEG preprotein conducting channel. Has a central role in coupling the hydrolysis of ATP to the transfer of proteins into and across the cell membrane, serving both as a receptor for the preprotein-SecB complex and as an ATP-driven molecular motor driving the stepwise translocation of polypeptide chains across the membrane. In Idiomarina loihiensis (strain ATCC BAA-735 / DSM 15497 / L2-TR), this protein is Protein translocase subunit SecA.